Consider the following 488-residue polypeptide: N-succinylglutamate 5-semialdehyde dehydrogenase (488 aa).

Position 221–226 (221–226 (GSSRTG)) interacts with NAD(+). Active-site residues include Glu244 and Cys278.

This sequence belongs to the aldehyde dehydrogenase family. AstD subfamily.

It catalyses the reaction N-succinyl-L-glutamate 5-semialdehyde + NAD(+) + H2O = N-succinyl-L-glutamate + NADH + 2 H(+). Its pathway is amino-acid degradation; L-arginine degradation via AST pathway; L-glutamate and succinate from L-arginine: step 4/5. Catalyzes the NAD-dependent reduction of succinylglutamate semialdehyde into succinylglutamate. The polypeptide is N-succinylglutamate 5-semialdehyde dehydrogenase (Pseudomonas savastanoi pv. phaseolicola (strain 1448A / Race 6) (Pseudomonas syringae pv. phaseolicola (strain 1448A / Race 6))).